Consider the following 889-residue polypeptide: Alanine--tRNA ligase (889 aa).

Residues H564, H568, C677, and H681 each contribute to the Zn(2+) site.

It belongs to the class-II aminoacyl-tRNA synthetase family. The cofactor is Zn(2+).

The protein localises to the cytoplasm. It carries out the reaction tRNA(Ala) + L-alanine + ATP = L-alanyl-tRNA(Ala) + AMP + diphosphate. Functionally, catalyzes the attachment of alanine to tRNA(Ala) in a two-step reaction: alanine is first activated by ATP to form Ala-AMP and then transferred to the acceptor end of tRNA(Ala). Also edits incorrectly charged Ser-tRNA(Ala) and Gly-tRNA(Ala) via its editing domain. The protein is Alanine--tRNA ligase of Rhodopseudomonas palustris (strain ATCC BAA-98 / CGA009).